Reading from the N-terminus, the 77-residue chain is Omega-conotoxin-like SO-5 (77 aa).

An N-terminal signal peptide occupies residues 1 to 22; it reads MKLTCVMIVAVLLLTACQLITA. Positions 23 to 42 are excised as a propeptide; sequence DDSRGTQKHRSLRSTTKVSK. Disulfide bonds link cysteine 46–cysteine 61, cysteine 53–cysteine 64, and cysteine 60–cysteine 71.

This sequence belongs to the conotoxin O1 superfamily. Expressed by the venom duct.

The protein resides in the secreted. Its function is as follows. Omega-conotoxins act at presynaptic membranes, they bind and block voltage-gated calcium channels (Cav). The sequence is that of Omega-conotoxin-like SO-5 (SO5) from Conus striatus (Striated cone).